The primary structure comprises 155 residues: Endoribonuclease YbeY (155 aa).

The Zn(2+) site is built by His-120, His-124, and His-130.

The protein belongs to the endoribonuclease YbeY family. It depends on Zn(2+) as a cofactor.

It is found in the cytoplasm. Single strand-specific metallo-endoribonuclease involved in late-stage 70S ribosome quality control and in maturation of the 3' terminus of the 16S rRNA. This chain is Endoribonuclease YbeY, found in Staphylococcus aureus (strain MSSA476).